The primary structure comprises 237 residues: MDQSEIVKLNKIKAKSAWLKKGAARSSAISCGLGIGIGFGIALFIFSQTLRGFGIYLAGLCTFHMWEYIWVTMYHPDKLSSKSFLLNHSPQFNMALLISFIEFWIEWYFFPSLKTFSLWWVGAICMVFGQIVRSVAMDTAGSNFTHLVQEEKRDDHVLVTNGIYQYMRHPSYFGWFVWSVSTQVILMNPISIIGFGWASWSFFSQRIENEEDYLIQFFGKSYKDYKKSVWSGIPGIH.

Helical transmembrane passes span 26–46 (SSAI…LFIF), 53–73 (FGIY…WVTM), 92–112 (FNMA…FFPS), and 116–136 (FSLW…RSVA). Residues Gln-149, 156–159 (HVLV), Tyr-164, and 169–172 (HPSY) contribute to the S-adenosyl-L-methionine site. Residues 184 to 204 (VILMNPISIIGFGWASWSFFS) form a helical membrane-spanning segment. Arg-206 provides a ligand contact to substrate. S-adenosyl-L-methionine is bound at residue Glu-210.

This sequence belongs to the class VI-like SAM-binding methyltransferase superfamily. Isoprenylcysteine carboxyl methyltransferase family.

The protein localises to the endoplasmic reticulum membrane. The enzyme catalyses [protein]-C-terminal S-[(2E,6E)-farnesyl]-L-cysteine + S-adenosyl-L-methionine = [protein]-C-terminal S-[(2E,6E)-farnesyl]-L-cysteine methyl ester + S-adenosyl-L-homocysteine. Methylates the C-terminal cysteine residues of small GTPases and the heterotrimeric G protein gamma subunit in response to cAMP. The methylation is required for intercellular signaling and regulation of cAMP waves propagation. It also seems to induce the activity of car1, a G protein-coupled receptor which senses extracellular cAMP during the aggregation phase of development. The chain is Protein-S-isoprenylcysteine O-methyltransferase (icmt-1) from Dictyostelium discoideum (Social amoeba).